The chain runs to 204 residues: ATP phosphoribosyltransferase (204 aa).

It belongs to the ATP phosphoribosyltransferase family. Short subfamily.

It localises to the cytoplasm. It carries out the reaction 1-(5-phospho-beta-D-ribosyl)-ATP + diphosphate = 5-phospho-alpha-D-ribose 1-diphosphate + ATP. The protein operates within amino-acid biosynthesis; L-histidine biosynthesis; L-histidine from 5-phospho-alpha-D-ribose 1-diphosphate: step 1/9. In terms of biological role, catalyzes the condensation of ATP and 5-phosphoribose 1-diphosphate to form N'-(5'-phosphoribosyl)-ATP (PR-ATP). Has a crucial role in the pathway because the rate of histidine biosynthesis seems to be controlled primarily by regulation of HisG enzymatic activity. The protein is ATP phosphoribosyltransferase (hisG) of Pyrococcus furiosus (strain ATCC 43587 / DSM 3638 / JCM 8422 / Vc1).